Consider the following 807-residue polypeptide: MLVSLSWLKDLVQVDDSVDDLAERLSMAGFEVENIDDLSARSQGVVVGHVLTRDKHPNADKLSVCTVDIGAKESVQIVCGAANVRAGIHVPVATVGAVLPAVDLTIKAGELRGVASNGMICSLSELGLTAESSGIAILEDTTKEIPAVGTPVAALFGLDDAVLELAITANRPDGLSMVGIAREVAALTNAELSLPLLNHTPEQEPLQAELDGSYYAVACVEGVQGGQESPPWIQQRLNRAGINAVNAVVDITNLVMLEQGQPLHAFDAEALESLTGKPVDAASFAVRPAKDQETFIGLDDQSLCLDPRVQVVTCHDRAIAIAGVMGSRDSAVSDSTTKIWLESAMFSPIRVRQSSRAVGLRTDASSRFEKGLPPEVTLACSQRAIELLSDQFACRVNGRWVGGEGPRTPVPLQLRRDALHQLLGPIDTDSGPVDLADHTIEQCLTALGCELESTDEGWAVMTPPSRRQDLHREVDLIEEVARLVGFDKFGSHLPDPVSPGSLTSRQQAERRLRRLFCSTGLQEITTLSLVGSSDGDARIAISNPLLAETSHLRTNLWEEHLQICVRNLKASMAGCSIFEVGNTYSGTPESVVQSGIISGVICGDRRLERWSTSGKYQAPNYYEARGVLSRVMEALHLELSDRPLADDARLHPGRAATLVMEGRPLGCFGQLHPALADDLSLPESTYLFELDLERLLDATTRTNRWTPIYKSFPTVPASERDLAVVVDRNSNAADLIQAIRKAGKPLLEHVELIDRFEGDQLGDQKVSQAFRLRYRSQNETLTDDKIQPVHDKVRAALSKQFKAELRS.

Residues Ser-39–Ala-153 form the tRNA-binding domain. The region spanning Arg-407–Ser-491 is the B5 domain. Mg(2+) is bound by residues Asp-469, Asp-475, Glu-478, and Glu-479. The region spanning Pro-713 to Arg-806 is the FDX-ACB domain.

It belongs to the phenylalanyl-tRNA synthetase beta subunit family. Type 1 subfamily. Tetramer of two alpha and two beta subunits. The cofactor is Mg(2+).

It is found in the cytoplasm. The catalysed reaction is tRNA(Phe) + L-phenylalanine + ATP = L-phenylalanyl-tRNA(Phe) + AMP + diphosphate + H(+). This chain is Phenylalanine--tRNA ligase beta subunit, found in Synechococcus sp. (strain CC9902).